The following is a 324-amino-acid chain: D-alanine--D-alanine ligase (324 aa).

One can recognise an ATP-grasp domain in the interval 121-321 (NQYLKGFGIR…IKDVMTDIIE (201 aa)). Residue 149 to 204 (INKIGLPCFIKPNAGGSSFGVTKVKTKEDIQPAIEKAFEESDEVMIEAFMKGTEIT) participates in ATP binding. Asp-275, Glu-288, and Asn-290 together coordinate Mg(2+).

This sequence belongs to the D-alanine--D-alanine ligase family. The cofactor is Mg(2+). Mn(2+) serves as cofactor.

It is found in the cytoplasm. The enzyme catalyses 2 D-alanine + ATP = D-alanyl-D-alanine + ADP + phosphate + H(+). It participates in cell wall biogenesis; peptidoglycan biosynthesis. Functionally, cell wall formation. The protein is D-alanine--D-alanine ligase of Phocaeicola vulgatus (strain ATCC 8482 / DSM 1447 / JCM 5826 / CCUG 4940 / NBRC 14291 / NCTC 11154) (Bacteroides vulgatus).